Here is a 485-residue protein sequence, read N- to C-terminus: Hexokinase-1 (485 aa).

The Hexokinase domain maps to 21-468 (KELMDEIHQL…SGAGAAVIAA (448 aa)). The tract at residues 75 to 209 (TGKESGNYLA…ELPIEIVALI (135 aa)) is hexokinase small subdomain. ATP is bound by residues 86 to 91 (DLGGTN) and lysine 111. Substrate contacts are provided by residues serine 158, 175–176 (TK), 210–211 (ND), and asparagine 237. A hexokinase large subdomain region spans residues 210–457 (NDTVGTLIAS…DPITIVPAED (248 aa)). Position 245 is a phosphoserine (serine 245). Glutamate 269 serves as a coordination point for substrate. Phosphoserine is present on serine 272. Glutamate 302 is a substrate binding site. ATP is bound by residues 307-308 (GY), 344-348 (TSYPA), and 419-423 (SVYNK).

This sequence belongs to the hexokinase family. In terms of assembly, homodimer.

The catalysed reaction is a D-hexose + ATP = a D-hexose 6-phosphate + ADP + H(+). The enzyme catalyses D-fructose + ATP = D-fructose 6-phosphate + ADP + H(+). It carries out the reaction D-glucose + ATP = D-glucose 6-phosphate + ADP + H(+). It functions in the pathway carbohydrate metabolism; hexose metabolism. The protein operates within carbohydrate degradation; glycolysis; D-glyceraldehyde 3-phosphate and glycerone phosphate from D-glucose: step 1/4. With respect to regulation, subject to allosteric control. Substrate inhibition by ATP. Catalyzes the phosphorylation of hexose, such as D-glucose and D-fructose, to hexose 6-phosphate (D-glucose 6-phosphate and D-fructose 6-phosphate, respectively). Mediates the initial step of glycolysis by catalyzing phosphorylation of D-glucose to D-glucose 6-phosphate. This is Hexokinase-1 (HXK1) from Saccharomyces cerevisiae (strain ATCC 204508 / S288c) (Baker's yeast).